A 345-amino-acid polypeptide reads, in one-letter code: Nuclear distribution protein nudE-like 1-A (345 aa).

Residues 19-190 (WRELSKRLKQ…LAVRERQTDG (172 aa)) are a coiled coil. Basic and acidic residues predominate over residues 182-192 (AVRERQTDGTR). Disordered regions lie at residues 182–206 (AVRE…CDKT) and 326–345 (PPGV…PLSV). A compositionally biased stretch (pro residues) spans 334–345 (PPSPPGMLPLSV).

Belongs to the nudE family. Phosphorylated in mitosis.

It localises to the cytoplasm. The protein resides in the cytoskeleton. The protein localises to the microtubule organizing center. Its subcellular location is the centrosome. It is found in the spindle. Functionally, required for organization of the cellular microtubule array and microtubule anchoring at the centrosome. Positively regulates the activity of the minus-end directed microtubule motor protein dynein. May enhance dynein-mediated microtubule sliding by targeting dynein to the microtubule plus end. Positively regulates lysosome peripheral distribution and ruffled border formation in osteoclasts. The polypeptide is Nuclear distribution protein nudE-like 1-A (ndel1-a) (Xenopus laevis (African clawed frog)).